We begin with the raw amino-acid sequence, 121 residues long: Large ribosomal subunit protein bL19 (121 aa).

It belongs to the bacterial ribosomal protein bL19 family.

Its function is as follows. This protein is located at the 30S-50S ribosomal subunit interface and may play a role in the structure and function of the aminoacyl-tRNA binding site. This is Large ribosomal subunit protein bL19 from Chloroherpeton thalassium (strain ATCC 35110 / GB-78).